The following is a 521-amino-acid chain: Outer membrane protein assembly factor BamB (521 aa).

The N-terminal stretch at 1-19 is a signal peptide; sequence MKKLFLVIVPLLLSLLATS. A lipid anchor (N-palmitoyl cysteine) is attached at C20. The S-diacylglycerol cysteine moiety is linked to residue C20. The disordered stretch occupies residues 418 to 521; the sequence is KSGSIESSPK…IGDFSKGDSD (104 aa). Residues 429 to 444 show a composition bias toward basic and acidic residues; sequence LPDKKVDSNKTSKNDT. A compositionally biased stretch (polar residues) spans 445–477; that stretch reads DSNPATTATSTKDIQNPANQEMINSTPVSNTST.

It belongs to the BamB family. In terms of assembly, part of the Bam complex.

Its subcellular location is the cell outer membrane. Functionally, part of the outer membrane protein assembly complex, which is involved in assembly and insertion of beta-barrel proteins into the outer membrane. The protein is Outer membrane protein assembly factor BamB of Francisella salina.